The primary structure comprises 435 residues: GTPase Der (435 aa).

2 consecutive EngA-type G domains span residues 4 to 167 and 175 to 350; these read PTLA…PSED and IKFS…ENQT. Residues 10 to 17, 57 to 61, 119 to 122, 181 to 188, 228 to 232, and 293 to 296 each bind GTP; these read GRPNVGKS, DTGGI, NKVD, DTAGI, and NKWD. Residues 351-435 enclose the KH-like domain; sequence RRIQSSVLND…PIHIIARKRK (85 aa).

This sequence belongs to the TRAFAC class TrmE-Era-EngA-EngB-Septin-like GTPase superfamily. EngA (Der) GTPase family. Associates with the 50S ribosomal subunit.

Its function is as follows. GTPase that plays an essential role in the late steps of ribosome biogenesis. This is GTPase Der from Lacticaseibacillus paracasei (strain ATCC 334 / BCRC 17002 / CCUG 31169 / CIP 107868 / KCTC 3260 / NRRL B-441) (Lactobacillus paracasei).